Consider the following 606-residue polypeptide: 4-hydroxy-3-methylbut-2-en-1-yl diphosphate synthase (flavodoxin) (606 aa).

[4Fe-4S] cluster-binding residues include Cys513, Cys516, Cys547, and Glu554.

It belongs to the IspG family. [4Fe-4S] cluster is required as a cofactor.

The enzyme catalyses (2E)-4-hydroxy-3-methylbut-2-enyl diphosphate + oxidized [flavodoxin] + H2O + 2 H(+) = 2-C-methyl-D-erythritol 2,4-cyclic diphosphate + reduced [flavodoxin]. Its pathway is isoprenoid biosynthesis; isopentenyl diphosphate biosynthesis via DXP pathway; isopentenyl diphosphate from 1-deoxy-D-xylulose 5-phosphate: step 5/6. Functionally, converts 2C-methyl-D-erythritol 2,4-cyclodiphosphate (ME-2,4cPP) into 1-hydroxy-2-methyl-2-(E)-butenyl 4-diphosphate. This is 4-hydroxy-3-methylbut-2-en-1-yl diphosphate synthase (flavodoxin) from Chlamydia caviae (strain ATCC VR-813 / DSM 19441 / 03DC25 / GPIC) (Chlamydophila caviae).